The sequence spans 326 residues: MKSIAIIGASGYTGAQVTSLIQADDQLKIQGLYVSENSLDKGKTLASLYPVYSHIDLSLAPLTEQAKQAIVNEADAVVLATDHGVSLHLAAWFYQAGLAVFDLSGAYRFADSEQYPKWYGFEHIYPEVLAEAVYGLAEWNTEAIAASKMIAVPGCYPTASLTALKPLKDLMTDSLPVINAVSGVTGAGRKAQLHTSFCEVSLTPYGVLGHRHQPEIATQLGQQVIFTPHLGNFKRGILATITVQMKPGVSEADIAKAYEVYESAPLVNVYHNQFPKVDDVVHTPNCLLGWKYDPLNGYLVVASAIDNLMKGAASQAHQCIKIHFNY.

Residue Cys-155 is part of the active site.

Belongs to the NAGSA dehydrogenase family. Type 1 subfamily.

The protein localises to the cytoplasm. It carries out the reaction N-acetyl-L-glutamate 5-semialdehyde + phosphate + NADP(+) = N-acetyl-L-glutamyl 5-phosphate + NADPH + H(+). It participates in amino-acid biosynthesis; L-arginine biosynthesis; N(2)-acetyl-L-ornithine from L-glutamate: step 3/4. Catalyzes the NADPH-dependent reduction of N-acetyl-5-glutamyl phosphate to yield N-acetyl-L-glutamate 5-semialdehyde. The polypeptide is N-acetyl-gamma-glutamyl-phosphate reductase (Shewanella loihica (strain ATCC BAA-1088 / PV-4)).